The sequence spans 260 residues: Eukaryotic translation initiation factor 3 subunit G-2 (260 aa).

An RRM domain is found at 180–258 (CAVRISNLSE…LILSVEWSKP (79 aa)).

Belongs to the eIF-3 subunit G family. Component of the eukaryotic translation initiation factor 3 (eIF-3) complex. The eIF-3 complex interacts with pix.

It is found in the cytoplasm. Functionally, RNA-binding component of the eukaryotic translation initiation factor 3 (eIF-3) complex, which is involved in protein synthesis of a specialized repertoire of mRNAs and, together with other initiation factors, stimulates binding of mRNA and methionyl-tRNAi to the 40S ribosome. The eIF-3 complex specifically targets and initiates translation of a subset of mRNAs involved in cell proliferation. This subunit can bind 18S rRNA. The sequence is that of Eukaryotic translation initiation factor 3 subunit G-2 from Drosophila grimshawi (Hawaiian fruit fly).